We begin with the raw amino-acid sequence, 543 residues long: Zinc finger protein egl-43 (543 aa).

Positions 2–62 (SIDTDFLTSV…NLIKEADDGE (61 aa)) are positive regulatory (PR) domain. C2H2-type zinc fingers lie at residues 159-181 (HKCGVCPKSFSSASGLKQHSHIH) and 187-209 (FRCHLCPKSYTQFSNLCRHRRVH). The C2H2-type 3; atypical zinc finger occupies 213 to 233 (WTCPTCQSQMPSQAALTKHRP). Residues 299 to 380 (PDAECSSGHA…TSTKKRPTSH (82 aa)) are disordered. The span at 306 to 317 (GHASESSPTTTE) shows a compositional bias: polar residues. Residues 335 to 348 (TTSKSDDGEDRDSI) are compositionally biased toward basic and acidic residues. 2 consecutive C2H2-type zinc fingers follow at residues 444 to 466 (YTCKFCQKVFPRSANLTRHLRTH) and 472 to 495 (YKCQYCERSFSISSNLQRHVRNIH). The segment at 496–543 (NKPNTSLTPHNHHRQRSLHNSTSTSTTTTTVHHPLLHLPGTSVPVPKV) is disordered. Residues 513 to 533 (LHNSTSTSTTTTTVHHPLLHL) are compositionally biased toward low complexity.

It localises to the nucleus. Probable transcription factor, required for migration of the hermaphrodite-specific motor neurons (HSNs) from the tail to the gonad primordium during HSN cell differentiation. Required for phasmid neuron development. Required to specify the pi-cell fate of ventral uterine precursor cell (VU) cells. Its function is as follows. Probable transcription factor, involved in lin-12 (Notch)-dependent anchor cell (AC) and ventral uterine (VU) precursor cell fate specification and in AC invasion. Prevents AC proliferation after AC cell specification by repressing lin-12 expression. May form a positive feedback loop, together with the transcription factor fos-1, that maintains mutual high levels of expression and so activates AC invasion. In terms of biological role, dispensable for anchor cell (AC) invasion and for preventing AC proliferation. The sequence is that of Zinc finger protein egl-43 from Caenorhabditis elegans.